A 903-amino-acid polypeptide reads, in one-letter code: E3 ubiquitin-protein ligase DDB_G0292642 (903 aa).

Disordered stretches follow at residues 115–137 (FTLPPTTNNNNNNTTNVLESSSD), 167–236 (LLKR…VIGS), 284–366 (VNKT…NNLK), 415–487 (TPSL…TTEI), and 549–576 (DDSEEEEEEEEEEEGEESDSESSSGSEG). Composition is skewed to low complexity over residues 120–130 (TTNNNNNNTTN) and 178–216 (TTTTTTTTTTANNNNTRRNRNNNNNNNNNANGANRTIDT). A compositionally biased stretch (acidic residues) spans 217–232 (SSEDDDESISSSDDDI). 2 stretches are compositionally biased toward low complexity: residues 287-301 (TSTTSTTTTTTTTTT) and 311-323 (NRNNNNNNNNNNN). A coiled-coil region spans residues 313–352 (NNNNNNNNNNNKRFEIESEEESETDISSEEEENNNNNNNN). The span at 329 to 345 (ESEEESETDISSEEEEN) shows a compositional bias: acidic residues. Over residues 346 to 364 (NNNNNNNSNNNNNSNNNNN) the composition is skewed to low complexity. The span at 415–427 (TPSLRLSSAHLPN) shows a compositional bias: polar residues. The segment covering 428 to 443 (TTTTTTTTTTTTTTTT) has biased composition (low complexity). 2 stretches are compositionally biased toward acidic residues: residues 451-466 (NDDDESSDSDSSDSEI) and 549-568 (DDSEEEEEEEEEEEGEESDS). Positions 542 to 569 (AELVFEYDDSEEEEEEEEEEEGEESDSE) form a coiled coil. A TRIAD supradomain region spans residues 612-832 (EPVECKICYM…NEYPECFDRQ (221 aa)). Zn(2+)-binding residues include cysteine 616, cysteine 619, cysteine 634, histidine 636, cysteine 639, cysteine 642, cysteine 661, cysteine 666, cysteine 704, cysteine 709, cysteine 725, cysteine 728, cysteine 733, cysteine 736, histidine 741, cysteine 746, cysteine 782, and cysteine 785. The RING-type 1 zinc-finger motif lies at 616 to 666 (CKICYMEYDQSNEVFTLECDHVYCFDCITEHLRILITEGRVLDISCPHPQC). The IBR-type zinc-finger motif lies at 683–746 (NWLKYQKFSM…GEYSHEGAKC (64 aa)). The segment at 782–811 (CPTCKSHIEKHDGCNHMTCINCQHQFCWLC) adopts an RING-type 2; atypical zinc-finger fold. The active site involves cysteine 795. Zn(2+)-binding residues include cysteine 800, cysteine 803, cysteine 808, cysteine 811, histidine 819, and cysteine 828. The chain crosses the membrane as a helical span at residues 864–884 (TAAFTVGAPLLLIGGAVLLCV).

The protein belongs to the RBR family. RNF14 subfamily.

It localises to the membrane. It carries out the reaction [E2 ubiquitin-conjugating enzyme]-S-ubiquitinyl-L-cysteine + [acceptor protein]-L-lysine = [E2 ubiquitin-conjugating enzyme]-L-cysteine + [acceptor protein]-N(6)-ubiquitinyl-L-lysine.. Its pathway is protein modification; protein ubiquitination. In terms of biological role, E3 ubiquitin-protein ligase. In Dictyostelium discoideum (Social amoeba), this protein is E3 ubiquitin-protein ligase DDB_G0292642.